The sequence spans 137 residues: MIKKYEVMYILDQDLKDTKELVAKLDGILSEGGQILESNDLGLLDFTYEINHKKKGFYHIVIVQATTQAIKEFERIAKIDKNVVRTLVLNTQNIQNYEQSVVLSKTDMTKFEEEQREKKNFRKPFIKREEAATKENK.

A disordered region spans residues 113 to 137; it reads EEQREKKNFRKPFIKREEAATKENK. The span at 126 to 137 shows a compositional bias: basic and acidic residues; it reads IKREEAATKENK.

This sequence belongs to the bacterial ribosomal protein bS6 family.

In terms of biological role, binds together with bS18 to 16S ribosomal RNA. The chain is Small ribosomal subunit protein bS6 from Mycoplasma capricolum subsp. capricolum (strain California kid / ATCC 27343 / NCTC 10154).